Reading from the N-terminus, the 894-residue chain is Disease resistance protein SUMM2 (894 aa).

Residues 31–71 are a coiled coil; sequence ELSKNVVAMKKDMEVLKKKRDDVKRRVDIEEFTRRRERLSQ. Residues 140-443 form the NB-ARC domain; that stretch reads TLATPIARIE…CEGFIDENES (304 aa). 183-190 contributes to the ATP binding site; that stretch reads GMGGVGKT. LRR repeat units follow at residues 517-538, 539-561, 564-586, 588-610, 611-633, 634-656, and 660-681; these read SVRRMSLMENEIEILSGSPECL, ELTTLFLQKNDSLLHISDEFFRC, MLVVLDLSGNSSLRKLPNQISKL, SLRYLDLSWTYIKRLPVGLQELK, KLRYLRLDYMKRLKSISGISNIS, SLRKLQLLQSKMSLDMSLVEELQ, and HLEVLNISIKSSLVVEKLLNAP.

The protein belongs to the disease resistance NB-LRR family. As to quaternary structure, interacts with PAT1.

With respect to regulation, negatively regulated by the MEKK1-MKK1-MKK2-MPK4 kinase cascade. Functionally, disease resistance protein that mediates defense responses against the bacterial pathogen Pseudomonas syringae pv tomato strain DC3000, and the virulent oomycete Hyaloperonospora arabidopsidis isolate Noco2. Becomes active when the MEKK1-MKK1-MKK2-MPK4 kinase cascade is disrupted by the microbial effector hopAI1. Does not seem to be required for the activation of MPK4 by flg22, or flg22-induced up-regulation of PAD3. Functions downstream of MEKK2/SUMM1 in immune responses, including cell death and defense responses. The polypeptide is Disease resistance protein SUMM2 (Arabidopsis thaliana (Mouse-ear cress)).